Consider the following 590-residue polypeptide: Probable metalloendopeptidase G1-type (590 aa).

His-41 contacts Zn(2+). Glu-44 is an active-site residue. His-45 provides a ligand contact to Zn(2+).

This sequence belongs to the peptidase M44 family. The cofactor is Zn(2+).

Its function is as follows. Seems to be involved in viral proteins maturation by cleavage at Ala-Gly-|-Xaa motifs. The protein is Probable metalloendopeptidase G1-type (GP045L) of Oryctolagus cuniculus (Rabbit).